A 632-amino-acid chain; its full sequence is Chaperone protein DnaK (632 aa).

Threonine 198 carries the phosphothreonine; by autocatalysis modification. Positions 599–632 (YKKAGASQQGAGSTTQSKKEEDVIEAEVEDKDNK) are disordered. Polar residues predominate over residues 604 to 614 (ASQQGAGSTTQ). Over residues 620 to 632 (DVIEAEVEDKDNK) the composition is skewed to acidic residues.

The protein belongs to the heat shock protein 70 family.

Functionally, acts as a chaperone. The protein is Chaperone protein DnaK of Thermodesulfovibrio yellowstonii (strain ATCC 51303 / DSM 11347 / YP87).